Here is a 221-residue protein sequence, read N- to C-terminus: MTRIKICGITRAEDALTAALAGADALGFNFSKKSPRLVSPDTAREIIAALPPLVAPVGIFVEQSAEEINELCRYCGLQIAQLHSDEYGAEATMRIHGTKVIRVFRPGPGFSVNEVRTYAKQTGCRGFLFDAFSPEMAGGTGKTIESSTASMLFEQTRDIGWALLAGGLNPENVADAVRLINPWGVDTASGVESAPGIKDARKITSFIQAVREVDRMLTAAD.

The protein belongs to the TrpF family.

It catalyses the reaction N-(5-phospho-beta-D-ribosyl)anthranilate = 1-(2-carboxyphenylamino)-1-deoxy-D-ribulose 5-phosphate. Its pathway is amino-acid biosynthesis; L-tryptophan biosynthesis; L-tryptophan from chorismate: step 3/5. The chain is N-(5'-phosphoribosyl)anthranilate isomerase from Chlorobaculum parvum (strain DSM 263 / NCIMB 8327) (Chlorobium vibrioforme subsp. thiosulfatophilum).